The primary structure comprises 676 residues: Lutropin-choriogonadotropic hormone receptor (676 aa).

The first 29 residues, 1 to 29 (MKQPLLALQLLKLLLLLLLPLPPLPRALR), serve as a signal peptide directing secretion. Topologically, residues 30 to 340 (EARCCPEPCN…EDIMGYDFLR (311 aa)) are extracellular. The N-linked (GlcNAc...) asparagine glycan is linked to Asn103. 5 LRR repeats span residues 126–151 (LPRL…IFSS), 153–175 (TNFI…AFQG), 176–200 (MNNE…AFNG), 201–224 (TTVI…AFRG), and 225–248 (ATGP…GLES). N-linked (GlcNAc...) asparagine glycosylation is found at Asn178 and Asn199. Tyr308 carries the post-translational modification Sulfotyrosine. A helical transmembrane segment spans residues 341-362 (VLIWLINILAIMGNMTVLFVLL). Residues 363-372 (TSRYKLTVPR) lie on the Cytoplasmic side of the membrane. The chain crosses the membrane as a helical span at residues 373–393 (FLMCNLSFADFCMGLYLLLIA). At 394–416 (SVDSQTKGQYYNHAIDWQTGSGC) the chain is on the extracellular side. Cys416 and Cys491 are oxidised to a cystine. The helical transmembrane segment at 417–439 (NTAGFFTVFASELSVYTLTVITL) threads the bilayer. The Cytoplasmic portion of the chain corresponds to 440–459 (ERWHTITYAIHLDQKLRLRH). Residues 460-482 (AILIMLGGWLFSSLIAMLPLVGV) form a helical membrane-spanning segment. The Extracellular portion of the chain corresponds to 483–502 (SNYMKVSICFPMDVETTLSQ). A helical transmembrane segment spans residues 503 to 526 (IYILTILILNVVAFIIICACYIKI). Over 527–547 (YFAVRNPELMATNKDTKIAKK) the chain is Cytoplasmic. The helical transmembrane segment at 548–571 (MAILIFTDFTCMAPISFFAISAAF) threads the bilayer. Residues 572–582 (KMPLITVTNSK) are Extracellular-facing. A helical transmembrane segment spans residues 583–604 (VLLVLFYPINSCANPFLYAIFT). Residues 605–676 (KTFRRDFFLL…LLDKTCYKEY (72 aa)) are Cytoplasmic-facing. Residues Cys620 and Cys621 are each lipidated (S-palmitoyl cysteine).

This sequence belongs to the G-protein coupled receptor 1 family. FSH/LSH/TSH subfamily. Sulfated.

Its subcellular location is the cell membrane. Functionally, receptor for lutropin-choriogonadotropic hormone. The activity of this receptor is mediated by G proteins which activate adenylate cyclase. The polypeptide is Lutropin-choriogonadotropic hormone receptor (LHCGR) (Callithrix jacchus (White-tufted-ear marmoset)).